Here is a 1359-residue protein sequence, read N- to C-terminus: DNA-directed RNA polymerase subunit beta (1359 aa).

Belongs to the RNA polymerase beta chain family. The RNAP catalytic core consists of 2 alpha, 1 beta, 1 beta' and 1 omega subunit. When a sigma factor is associated with the core the holoenzyme is formed, which can initiate transcription.

The catalysed reaction is RNA(n) + a ribonucleoside 5'-triphosphate = RNA(n+1) + diphosphate. Its function is as follows. DNA-dependent RNA polymerase catalyzes the transcription of DNA into RNA using the four ribonucleoside triphosphates as substrates. The sequence is that of DNA-directed RNA polymerase subunit beta from Nitrosomonas eutropha (strain DSM 101675 / C91 / Nm57).